The chain runs to 141 residues: MAKKVIANIKLQIKAGKATPSPPIGPALGQHGVNIMEFCKAYNALTQSQEGMVIPVVITVYADRSFSFVTKTPPAAVLLKQAAKIAKGAGDPKRDKVGTVSAAQVREIADLKYKDLNAVNIEGAIKIIEGTARSMGIEISG.

It belongs to the universal ribosomal protein uL11 family. In terms of assembly, part of the ribosomal stalk of the 50S ribosomal subunit. Interacts with L10 and the large rRNA to form the base of the stalk. L10 forms an elongated spine to which L12 dimers bind in a sequential fashion forming a multimeric L10(L12)X complex. One or more lysine residues are methylated.

Its function is as follows. Forms part of the ribosomal stalk which helps the ribosome interact with GTP-bound translation factors. The chain is Large ribosomal subunit protein uL11 from Syntrophus aciditrophicus (strain SB).